We begin with the raw amino-acid sequence, 264 residues long: Thiazole synthase (264 aa).

Catalysis depends on K106, which acts as the Schiff-base intermediate with DXP. 1-deoxy-D-xylulose 5-phosphate-binding positions include G167, A193–G194, and N215–S216.

It belongs to the ThiG family. Homotetramer. Forms heterodimers with either ThiH or ThiS.

It localises to the cytoplasm. The enzyme catalyses [ThiS sulfur-carrier protein]-C-terminal-Gly-aminoethanethioate + 2-iminoacetate + 1-deoxy-D-xylulose 5-phosphate = [ThiS sulfur-carrier protein]-C-terminal Gly-Gly + 2-[(2R,5Z)-2-carboxy-4-methylthiazol-5(2H)-ylidene]ethyl phosphate + 2 H2O + H(+). The protein operates within cofactor biosynthesis; thiamine diphosphate biosynthesis. Functionally, catalyzes the rearrangement of 1-deoxy-D-xylulose 5-phosphate (DXP) to produce the thiazole phosphate moiety of thiamine. Sulfur is provided by the thiocarboxylate moiety of the carrier protein ThiS. In vitro, sulfur can be provided by H(2)S. The sequence is that of Thiazole synthase from Stutzerimonas stutzeri (strain A1501) (Pseudomonas stutzeri).